The chain runs to 176 residues: NAD(P)H-quinone oxidoreductase subunit 6, chloroplastic (176 aa).

Helical transmembrane passes span 10–30 (ILLV…VLLT), 32–52 (PISS…FYIP), 61–81 (AQLL…VMFM), 92–112 (LWTI…FSLI), and 152–172 (FYLP…GAIA).

Belongs to the complex I subunit 6 family. NDH is composed of at least 16 different subunits, 5 of which are encoded in the nucleus.

Its subcellular location is the plastid. The protein resides in the chloroplast thylakoid membrane. The catalysed reaction is a plastoquinone + NADH + (n+1) H(+)(in) = a plastoquinol + NAD(+) + n H(+)(out). The enzyme catalyses a plastoquinone + NADPH + (n+1) H(+)(in) = a plastoquinol + NADP(+) + n H(+)(out). In terms of biological role, NDH shuttles electrons from NAD(P)H:plastoquinone, via FMN and iron-sulfur (Fe-S) centers, to quinones in the photosynthetic chain and possibly in a chloroplast respiratory chain. The immediate electron acceptor for the enzyme in this species is believed to be plastoquinone. Couples the redox reaction to proton translocation, and thus conserves the redox energy in a proton gradient. In Chloranthus spicatus (Chulantree), this protein is NAD(P)H-quinone oxidoreductase subunit 6, chloroplastic (ndhG).